Reading from the N-terminus, the 143-residue chain is UPF0201 protein Pars_1985 (143 aa).

Belongs to the UPF0201 family.

This chain is UPF0201 protein Pars_1985, found in Pyrobaculum arsenaticum (strain DSM 13514 / JCM 11321 / PZ6).